A 623-amino-acid polypeptide reads, in one-letter code: GATA zinc finger domain-containing protein 6 (623 aa).

3 disordered regions span residues 137 to 156, 167 to 197, and 245 to 289; these read IISP…GNNF, INNN…TAST, and PTTT…TAST. Residues 167-179 are compositionally biased toward low complexity; sequence INNNSNNNNNNNN. The segment covering 185–197 has biased composition (polar residues); the sequence is KQQTSKGSATAST. The GATA-type zinc finger occupies 320–345; the sequence is CHSCGETQTSQWRRGPDGCKSLCNAC. Positions 398–509 are disordered; that stretch reads IQQQQQKDDH…SINHNDKLIN (112 aa). Over residues 410 to 482 the composition is skewed to low complexity; sequence LSRPSSFSSQ…TSPTISSESL (73 aa). Positions 483-502 are enriched in polar residues; sequence NFSSATNTPTNLSPNLQSIN.

This chain is GATA zinc finger domain-containing protein 6 (gtaF), found in Dictyostelium discoideum (Social amoeba).